The following is a 38-amino-acid chain: Photosystem II reaction center protein L (38 aa).

Residues 17-37 (SLYWGLLLIFVLAVLFSSYIF) form a helical membrane-spanning segment.

Belongs to the PsbL family. PSII is composed of 1 copy each of membrane proteins PsbA, PsbB, PsbC, PsbD, PsbE, PsbF, PsbH, PsbI, PsbJ, PsbK, PsbL, PsbM, PsbT, PsbY, PsbZ, Psb30/Ycf12, at least 3 peripheral proteins of the oxygen-evolving complex and a large number of cofactors. It forms dimeric complexes.

The protein resides in the plastid. The protein localises to the chloroplast thylakoid membrane. One of the components of the core complex of photosystem II (PSII). PSII is a light-driven water:plastoquinone oxidoreductase that uses light energy to abstract electrons from H(2)O, generating O(2) and a proton gradient subsequently used for ATP formation. It consists of a core antenna complex that captures photons, and an electron transfer chain that converts photonic excitation into a charge separation. This subunit is found at the monomer-monomer interface and is required for correct PSII assembly and/or dimerization. The protein is Photosystem II reaction center protein L of Bigelowiella natans (Pedinomonas minutissima).